We begin with the raw amino-acid sequence, 349 residues long: Micronemal protein 6 (349 aa).

An N-terminal signal peptide occupies residues 1-23 (MRLFRCCAAAVVAAESLLWLKNG). EGF-like domains are found at residues 36-80 (IADN…VTCM), 96-134 (TPAA…SLDG), and 147-192 (GCEE…ITCK). Intrachain disulfides connect Cys40–Cys53, Cys45–Cys62, Cys64–Cys79, Cys100–Cys113, Cys105–Cys122, Cys124–Cys140, Cys148–Cys162, Cys153–Cys173, and Cys175–Cys191. Residues 194 to 291 (VPPHYRKPPF…EEGSGHAGAI (98 aa)) are disordered. The tract at residues 204-283 (EFGKGGHPVD…SEEQGKEREE (80 aa)) is acidic domain. Basic and acidic residues-rich tracts occupy residues 210–247 (HPVD…RTPL) and 276–285 (EQGKEREEGS). Residues 290 to 310 (AIAGGVIGGLLLLSAAGAGVA) form a helical membrane-spanning segment.

As to quaternary structure, interacts directly with MIC1. Part of the MIC6-MIC1-MIC4 complex. In terms of processing, subject to proteolytic processing involving both the N-terminus and the C-terminus. The first EGF-like domain (EGF-like domain 1) is removed by proteolytic cleavage by ASP3 and is not present in the mature protein. Released as soluble 35 kDa protein after proteolytic processing at the C-terminus.

It localises to the cytoplasmic vesicle. The protein resides in the secretory vesicle. Its subcellular location is the microneme membrane. The protein localises to the secreted. Its function is as follows. Escorter protein required for import of MIC1 and MIC4 adhesins into the microneme. The chain is Micronemal protein 6 from Toxoplasma gondii.